The chain runs to 165 residues: MNYYTTAETPLGELIIAEEEDRITRLFLSQEDWVDWKETVQNTEHKETPNLAEAKQQLQEYFAGERKTFSLPLSQKGTPFQQKVWQALERIPYGESRSYADIAAAVGSPKAVRAVGQANKRNDLPIFVPCHRVIGKNSALTGYAGSKTEIKAFLLNIERISYKEK.

The active-site Nucleophile; methyl group acceptor is the C130.

Belongs to the MGMT family.

The protein resides in the cytoplasm. It catalyses the reaction a 6-O-methyl-2'-deoxyguanosine in DNA + L-cysteinyl-[protein] = S-methyl-L-cysteinyl-[protein] + a 2'-deoxyguanosine in DNA. It carries out the reaction a 4-O-methyl-thymidine in DNA + L-cysteinyl-[protein] = a thymidine in DNA + S-methyl-L-cysteinyl-[protein]. Its function is as follows. Involved in the cellular defense against the biological effects of O6-methylguanine (O6-MeG) and O4-methylthymine (O4-MeT) in DNA. Repairs the methylated nucleobase in DNA by stoichiometrically transferring the methyl group to a cysteine residue in the enzyme. This is a suicide reaction: the enzyme is irreversibly inactivated. This chain is Methylated-DNA--protein-cysteine methyltransferase, constitutive, found in Bacillus subtilis (strain 168).